A 310-amino-acid polypeptide reads, in one-letter code: Apolipoprotein E (310 aa).

The N-terminal stretch at 1 to 18 is a signal peptide; that stretch reads MKVLWPALVVTLLAGCRA. 8 consecutive repeat copies span residues 77–98, 99–120, 121–142, 143–164, 165–186, 187–208, 209–226, and 227–248. The interval 77-248 is 8 X 22 AA approximate tandem repeats; it reads ALMDDTMKEV…RLDEVREQVQ (172 aa). The segment at 155 to 165 is LDL and other lipoprotein receptors binding; sequence HLRKLRKRLLR. Position 159–162 (159–162) interacts with heparin; sequence LRKR. Residues 207–283 are lipid-binding and lipoprotein association; it reads HTLVSKPLQE…SWFEPLVQDM (77 aa). Heparin is bound at residue 222 to 229; the sequence is AQRLRGRL. Residues 259-310 form a homooligomerization region; sequence NQVRLQAEAFQGRLKSWFEPLVQDMQQKWAELVEKVQLALRAVPTSVPSEKQ. A specificity for association with VLDL region spans residues 271 to 283; sequence RLKSWFEPLVQDM.

It belongs to the apolipoprotein A1/A4/E family. Homotetramer. May interact with ABCA1; functionally associated with ABCA1 in the biogenesis of HDLs. May interact with APP/A4 amyloid-beta peptide; the interaction is extremely stable in vitro but its physiological significance is unclear. May interact with MAPT. May interact with MAP2. In the cerebrospinal fluid, interacts with secreted SORL1. Interacts with PMEL; this allows the loading of PMEL luminal fragment on ILVs to induce fibril nucleation. Post-translationally, APOE exists as multiple glycosylated and sialylated glycoforms within cells and in plasma. The extent of glycosylation and sialylation are tissue and context specific. In terms of processing, glycated in plasma VLDL. Phosphorylated by FAM20C in the extracellular medium.

The protein localises to the secreted. It is found in the extracellular space. The protein resides in the extracellular matrix. It localises to the extracellular vesicle. Its subcellular location is the endosome. The protein localises to the multivesicular body. Its function is as follows. APOE is an apolipoprotein, a protein associating with lipid particles, that mainly functions in lipoprotein-mediated lipid transport between organs via the plasma and interstitial fluids. APOE is a core component of plasma lipoproteins and is involved in their production, conversion and clearance. Apolipoproteins are amphipathic molecules that interact both with lipids of the lipoprotein particle core and the aqueous environment of the plasma. As such, APOE associates with chylomicrons, chylomicron remnants, very low density lipoproteins (VLDL) and intermediate density lipoproteins (IDL) but shows a preferential binding to high-density lipoproteins (HDL). It also binds a wide range of cellular receptors including the LDL receptor/LDLR and the very low-density lipoprotein receptor/VLDLR that mediate the cellular uptake of the APOE-containing lipoprotein particles. Finally, APOE also has a heparin-binding activity and binds heparan-sulfate proteoglycans on the surface of cells, a property that supports the capture and the receptor-mediated uptake of APOE-containing lipoproteins by cells. This chain is Apolipoprotein E (APOE), found in Dicerorhinus sumatrensis harrissoni (Bornean rhinoceros).